We begin with the raw amino-acid sequence, 209 residues long: Scoloptoxin SSD346 (209 aa).

The N-terminal stretch at Asn1–Gly22 is a signal peptide.

In terms of processing, contains 2 disulfide bonds. Expressed by the venom gland.

It localises to the secreted. In terms of biological role, may act as a voltage-gated calcium channel inhibitor. The polypeptide is Scoloptoxin SSD346 (Scolopendra dehaani (Thai centipede)).